The chain runs to 213 residues: Peroxisomal protein 2 (213 aa).

The short motif at 211–213 is the Peroxisomal target signal 1 (PTS1) element; sequence ETL.

The protein belongs to the PXP2 family.

The protein localises to the peroxisome matrix. Its subcellular location is the cytoplasm. It localises to the cytosol. The protein resides in the nucleus. In terms of biological role, probably involved in peroxisome formation or maintenance as well as in amino acid metabolism. In Schizosaccharomyces pombe (strain 972 / ATCC 24843) (Fission yeast), this protein is Peroxisomal protein 2.